The sequence spans 520 residues: Putative cytochrome P450 CYP13A5 (520 aa).

Residue Cys464 coordinates heme.

It belongs to the cytochrome P450 family. Heme serves as cofactor.

Cytochromes P450 are a group of heme-thiolate monooxygenases. They oxidize a variety of structurally unrelated compounds, including steroids, fatty acids, and xenobiotics. The protein is Putative cytochrome P450 CYP13A5 (cyp-13A5) of Caenorhabditis elegans.